Here is a 123-residue protein sequence, read N- to C-terminus: Small ribosomal subunit protein uS12 (123 aa).

The residue at position 89 (D89) is a 3-methylthioaspartic acid.

Belongs to the universal ribosomal protein uS12 family. Part of the 30S ribosomal subunit. Contacts proteins S8 and S17. May interact with IF1 in the 30S initiation complex.

In terms of biological role, with S4 and S5 plays an important role in translational accuracy. Its function is as follows. Interacts with and stabilizes bases of the 16S rRNA that are involved in tRNA selection in the A site and with the mRNA backbone. Located at the interface of the 30S and 50S subunits, it traverses the body of the 30S subunit contacting proteins on the other side and probably holding the rRNA structure together. The combined cluster of proteins S8, S12 and S17 appears to hold together the shoulder and platform of the 30S subunit. The chain is Small ribosomal subunit protein uS12 from Rhizobium etli (strain ATCC 51251 / DSM 11541 / JCM 21823 / NBRC 15573 / CFN 42).